Reading from the N-terminus, the 70-residue chain is SPbeta prophage-derived uncharacterized protein YotJ (70 aa).

This Bacillus subtilis (strain 168) protein is SPbeta prophage-derived uncharacterized protein YotJ (yotJ).